The primary structure comprises 132 residues: Insulin-like 3 (132 aa).

The first 21 residues, 1-21, serve as a signal peptide directing secretion; the sequence is MDRRPLTWALVLLGPALAIAL. Gln-27 is modified (pyrrolidone carboxylic acid). 3 disulfides stabilise this stretch: Cys-34/Cys-117, Cys-46/Cys-130, and Cys-116/Cys-121. Positions 67-104 are cleaved as a propeptide — c peptide like; the sequence is LLRWLEGQHLLHGLMASGDPVLVLAPQPLPQASRHHHH.

The protein belongs to the insulin family. Heterodimer of a B chain and an A chain linked by two disulfide bonds. 20% of B chains include an extra N-terminal pentapeptide. In terms of tissue distribution, expressed exclusively in Leydig cells of the testis.

It is found in the secreted. Functionally, seems to play a role in testicular function. May be a trophic hormone with a role in testicular descent in fetal life. Is a ligand for LGR8 receptor. This is Insulin-like 3 (INSL3) from Bos taurus (Bovine).